A 425-amino-acid chain; its full sequence is Phosphoribosylamine--glycine ligase (425 aa).

The ATP-grasp domain occupies 110-317 (KEFMKRHGIP…LFDALLASVE (208 aa)). 137-198 (ETCPTFPQVI…EAFLSGQEAS (62 aa)) is a binding site for ATP. Glutamate 287 and asparagine 289 together coordinate Mg(2+).

The protein belongs to the GARS family. Mg(2+) serves as cofactor. The cofactor is Mn(2+).

The catalysed reaction is 5-phospho-beta-D-ribosylamine + glycine + ATP = N(1)-(5-phospho-beta-D-ribosyl)glycinamide + ADP + phosphate + H(+). It participates in purine metabolism; IMP biosynthesis via de novo pathway; N(1)-(5-phospho-D-ribosyl)glycinamide from 5-phospho-alpha-D-ribose 1-diphosphate: step 2/2. This chain is Phosphoribosylamine--glycine ligase, found in Chlorobaculum tepidum (strain ATCC 49652 / DSM 12025 / NBRC 103806 / TLS) (Chlorobium tepidum).